The chain runs to 107 residues: Somatoliberin (107 aa).

Residues 1-19 form the signal peptide; it reads MPLWVFFVILTLTNGSHCS. Residues 20 to 30 constitute a propeptide that is removed on maturation; that stretch reads PSPSLPFRIRR. L74 bears the Leucine amide mark. Residues 77 to 107 constitute a propeptide that is removed on maturation; it reads QVDSMWADHRQMSLESLLAALLQKHSRDSQG.

The protein belongs to the glucagon family.

Its subcellular location is the secreted. In terms of biological role, GRF is released by the hypothalamus and acts on the adenohypophyse to stimulate the secretion of growth hormone. The polypeptide is Somatoliberin (GHRH) (Mesocricetus auratus (Golden hamster)).